We begin with the raw amino-acid sequence, 332 residues long: uncharacterized protein (332 aa).

A disordered region spans residues 306 to 332 (EKNTSEVTEPKTGPSGTKDNYHLHSIF).

This is an uncharacterized protein from Homo sapiens (Human).